The following is a 402-amino-acid chain: MSKLSLSSLDKSKLEGKKVLVRVDFNVPLNDDGQITDDTRIRAAIPTIKYLINNSAKVILAAHFGRPKGKVNERMRLTPIAARLSEILGKKVNLTESCIGEEALEKSNNLNNGDVLLLENVRFYEEEEKNDLNFAKNLAAHADMYVNDAFGAAHRAHASTQGVTKFLEPSVAGFLLEKELKYLQGAIDAPNRPLAAIVGGSKVSSKIGVLDSLLDKCDKIIIGGGMIFTFYKARGLDVGKSLVEEDKLELARNLEEKAKTKGVELLLPSDVVLANEFSPTAESKVSQIDSISGDWMGLDIGPQSIKVFQNALAECKTIIWNGPMGVFEFDKFAEGTNSIATTLADLSSFSEVCTIIGGGDSVAAVEKAGLAEKMSHISTGGGASLELLEGKNLPGVAALNEN.

Substrate is bound by residues 24–26 (DFN), Arg40, 63–66 (HFGR), Arg122, and Arg155. ATP contacts are provided by residues Lys206, Gly297, Glu328, and 358–361 (GGDS).

Belongs to the phosphoglycerate kinase family. As to quaternary structure, monomer.

Its subcellular location is the cytoplasm. The catalysed reaction is (2R)-3-phosphoglycerate + ATP = (2R)-3-phospho-glyceroyl phosphate + ADP. It functions in the pathway carbohydrate degradation; glycolysis; pyruvate from D-glyceraldehyde 3-phosphate: step 2/5. The chain is Phosphoglycerate kinase from Prochlorococcus marinus (strain MIT 9515).